A 202-amino-acid polypeptide reads, in one-letter code: CASP-like protein 1E1 (202 aa).

At 1 to 33 (MESQCRPNVDGVHNGVESHVKVVEKPRSVGSSS) the chain is on the cytoplasmic side. The chain crosses the membrane as a helical span at residues 34 to 54 (EFVLRILGLLLTLIAAVVAGV). Residues 55 to 85 (DKQTKIIPLTLIKTLPSLHVPVTAKWSDMSA) lie on the Extracellular side of the membrane. The chain crosses the membrane as a helical span at residues 86-106 (FVYLVVSNAIACSYAAISLVL). Over 107–118 (VTMLGRRGKGGR) the chain is Cytoplasmic. A helical membrane pass occupies residues 119–139 (VLAVIVLDLHMVGLLFSANGA). Residues 140-172 (ATAVGVLGQYGNSHVEWKKVCNVFDSFCHHLVA) are Extracellular-facing. Residues 173 to 193 (SLALSFLGSLSFLGLVLLAIL) traverse the membrane as a helical segment. Over 194–202 (NLHKKSSTK) the chain is Cytoplasmic.

It belongs to the Casparian strip membrane proteins (CASP) family. Homodimer and heterodimers.

It is found in the cell membrane. The sequence is that of CASP-like protein 1E1 from Vitis vinifera (Grape).